A 383-amino-acid polypeptide reads, in one-letter code: UDP-N-acetylglucosamine--N-acetylmuramyl-(pentapeptide) pyrophosphoryl-undecaprenol N-acetylglucosamine transferase (383 aa).

UDP-N-acetyl-alpha-D-glucosamine is bound by residues 10-12 (TGG), Asn124, Arg165, Ser190, Ile245, and Gln290. Positions 363–383 (SPFGQAREPGQKPARPPDPAS) are disordered.

The protein belongs to the glycosyltransferase 28 family. MurG subfamily.

The protein localises to the cell inner membrane. It carries out the reaction di-trans,octa-cis-undecaprenyl diphospho-N-acetyl-alpha-D-muramoyl-L-alanyl-D-glutamyl-meso-2,6-diaminopimeloyl-D-alanyl-D-alanine + UDP-N-acetyl-alpha-D-glucosamine = di-trans,octa-cis-undecaprenyl diphospho-[N-acetyl-alpha-D-glucosaminyl-(1-&gt;4)]-N-acetyl-alpha-D-muramoyl-L-alanyl-D-glutamyl-meso-2,6-diaminopimeloyl-D-alanyl-D-alanine + UDP + H(+). It functions in the pathway cell wall biogenesis; peptidoglycan biosynthesis. In terms of biological role, cell wall formation. Catalyzes the transfer of a GlcNAc subunit on undecaprenyl-pyrophosphoryl-MurNAc-pentapeptide (lipid intermediate I) to form undecaprenyl-pyrophosphoryl-MurNAc-(pentapeptide)GlcNAc (lipid intermediate II). The protein is UDP-N-acetylglucosamine--N-acetylmuramyl-(pentapeptide) pyrophosphoryl-undecaprenol N-acetylglucosamine transferase of Anaeromyxobacter dehalogenans (strain 2CP-1 / ATCC BAA-258).